We begin with the raw amino-acid sequence, 188 residues long: Protein Cripto (188 aa).

The first 30 residues, 1-30 (MDCRKMARFSYSVIWIMAISKVFELGLVAG), serve as a signal peptide directing secretion. An EGF-like domain is found at 78–107 (LNRTCCLNGGTCMLGSFCACPPSFYGRNCE). N79 carries N-linked (GlcNAc...) asparagine glycosylation. Cystine bridges form between C82–C89, C83–C95, C97–C106, C115–C133, C128–C149, and C131–C140. Residue D150 is the site of GPI-anchor amidated aspartate attachment. A propeptide spans 151–188 (GLVMDEHLVASRTPELPPSARTTTFMLVGICLSIQSYY) (removed in mature form).

This sequence belongs to the EGF-CFC (Cripto-1/FRL1/Cryptic) family. As to quaternary structure, interacts with the activin type-1 receptor ACVR1B. Post-translationally, the GPI-anchor is attached to the protein in the endoplasmic reticulum and serves to target the protein to the cell surface. There, it is processed by GPI processing phospholipase A2 (TMEM8A), removing an acyl-chain at the sn-2 position of GPI and releasing CRIPTO as a lysophosphatidylinositol-bearing form, which is further cleaved by phospholipase D (GPLD1) into a soluble form. Preferentially expressed in gastric and colorectal carcinomas than in their normal counterparts. Expressed in breast and lung.

It is found in the cell membrane. Its subcellular location is the secreted. GPI-anchored cell membrane protein involved in Nodal signaling. Cell-associated CRIPTO acts as a Nodal coreceptor in cis. Shedding of CRIPTO by TMEM8A modulates Nodal signaling by allowing soluble CRIPTO to act as a Nodal coreceptor on other cells. Could play a role in the determination of the epiblastic cells that subsequently give rise to the mesoderm. The polypeptide is Protein Cripto (Homo sapiens (Human)).